Here is a 144-residue protein sequence, read N- to C-terminus: 3-dehydroquinate dehydratase (144 aa).

Tyrosine 22 functions as the Proton acceptor in the catalytic mechanism. Residues asparagine 73, histidine 79, and aspartate 86 each contribute to the substrate site. The active-site Proton donor is histidine 99. Residues 100 to 101 (LS) and arginine 110 each bind substrate.

This sequence belongs to the type-II 3-dehydroquinase family. In terms of assembly, homododecamer.

It carries out the reaction 3-dehydroquinate = 3-dehydroshikimate + H2O. It participates in metabolic intermediate biosynthesis; chorismate biosynthesis; chorismate from D-erythrose 4-phosphate and phosphoenolpyruvate: step 3/7. Catalyzes a trans-dehydration via an enolate intermediate. The chain is 3-dehydroquinate dehydratase from Pelotomaculum thermopropionicum (strain DSM 13744 / JCM 10971 / SI).